The following is a 514-amino-acid chain: ATP synthase subunit alpha (514 aa).

Position 170 to 177 (170 to 177) interacts with ATP; the sequence is GDRQIGKT.

The protein belongs to the ATPase alpha/beta chains family. As to quaternary structure, F-type ATPases have 2 components, CF(1) - the catalytic core - and CF(0) - the membrane proton channel. CF(1) has five subunits: alpha(3), beta(3), gamma(1), delta(1), epsilon(1). CF(0) has three main subunits: a(1), b(2) and c(9-12). The alpha and beta chains form an alternating ring which encloses part of the gamma chain. CF(1) is attached to CF(0) by a central stalk formed by the gamma and epsilon chains, while a peripheral stalk is formed by the delta and b chains.

Its subcellular location is the cell inner membrane. The catalysed reaction is ATP + H2O + 4 H(+)(in) = ADP + phosphate + 5 H(+)(out). In terms of biological role, produces ATP from ADP in the presence of a proton gradient across the membrane. The alpha chain is a regulatory subunit. The sequence is that of ATP synthase subunit alpha from Pseudomonas aeruginosa (strain LESB58).